The following is a 131-amino-acid chain: uncharacterized protein (131 aa).

The chain crosses the membrane as a helical span at residues 17–39; it reads VILLILILLPVVFLHIMLATWGL.

The protein localises to the membrane. This is an uncharacterized protein from Archaeoglobus fulgidus (strain ATCC 49558 / DSM 4304 / JCM 9628 / NBRC 100126 / VC-16).